A 147-amino-acid chain; its full sequence is Lysozyme C, tracheal isozyme (147 aa).

Residues 1-18 (MKALLILGLLLLSVAVQG) form the signal peptide. Residues 19–147 (KTFKRCELAK…LTSYVKGCGV (129 aa)) enclose the C-type lysozyme domain. Disulfide bonds link C24–C145, C48–C133, C83–C99, and C95–C113. Catalysis depends on residues E53 and D71.

This sequence belongs to the glycosyl hydrolase 22 family. As to quaternary structure, monomer. As to expression, trachea.

It catalyses the reaction Hydrolysis of (1-&gt;4)-beta-linkages between N-acetylmuramic acid and N-acetyl-D-glucosamine residues in a peptidoglycan and between N-acetyl-D-glucosamine residues in chitodextrins.. Lysozymes have primarily a bacteriolytic function; those in tissues and body fluids are associated with the monocyte-macrophage system and enhance the activity of immunoagents. The protein is Lysozyme C, tracheal isozyme of Bos taurus (Bovine).